A 258-amino-acid polypeptide reads, in one-letter code: Thiazole synthase (258 aa).

The Schiff-base intermediate with DXP role is filled by Lys-98. 1-deoxy-D-xylulose 5-phosphate-binding positions include Gly-159, 185–186 (AG), and 207–208 (NT).

This sequence belongs to the ThiG family. As to quaternary structure, homotetramer. Forms heterodimers with either ThiH or ThiS.

Its subcellular location is the cytoplasm. The enzyme catalyses [ThiS sulfur-carrier protein]-C-terminal-Gly-aminoethanethioate + 2-iminoacetate + 1-deoxy-D-xylulose 5-phosphate = [ThiS sulfur-carrier protein]-C-terminal Gly-Gly + 2-[(2R,5Z)-2-carboxy-4-methylthiazol-5(2H)-ylidene]ethyl phosphate + 2 H2O + H(+). Its pathway is cofactor biosynthesis; thiamine diphosphate biosynthesis. Its function is as follows. Catalyzes the rearrangement of 1-deoxy-D-xylulose 5-phosphate (DXP) to produce the thiazole phosphate moiety of thiamine. Sulfur is provided by the thiocarboxylate moiety of the carrier protein ThiS. In vitro, sulfur can be provided by H(2)S. The sequence is that of Thiazole synthase from Bacillus thuringiensis subsp. konkukian (strain 97-27).